A 454-amino-acid chain; its full sequence is Serine/threonine-protein phosphatase C23G10.1 (454 aa).

Residues Asp-196, His-198, Asp-224, and Asn-256 each coordinate Mn(2+). His-257 (proton donor) is an active-site residue. The Mn(2+) site is built by His-308 and His-382.

It belongs to the PPP phosphatase family. PP-1 subfamily. The cofactor is Mn(2+).

The enzyme catalyses O-phospho-L-seryl-[protein] + H2O = L-seryl-[protein] + phosphate. The catalysed reaction is O-phospho-L-threonyl-[protein] + H2O = L-threonyl-[protein] + phosphate. The sequence is that of Serine/threonine-protein phosphatase C23G10.1 from Caenorhabditis elegans.